A 209-amino-acid polypeptide reads, in one-letter code: Large ribosomal subunit protein uL1 (209 aa).

The protein belongs to the universal ribosomal protein uL1 family. As to quaternary structure, part of the 50S ribosomal subunit.

Functionally, binds directly to 23S rRNA. The L1 stalk is quite mobile in the ribosome, and is involved in E site tRNA release. Its function is as follows. Protein L1 is also a translational repressor protein, it controls the translation of the L11 operon by binding to its mRNA. The polypeptide is Large ribosomal subunit protein uL1 (rplA) (Neorickettsia sennetsu (strain ATCC VR-367 / Miyayama) (Ehrlichia sennetsu)).